A 126-amino-acid chain; its full sequence is Integrin alpha-M (126 aa).

3 N-linked (GlcNAc...) asparagine glycosylation sites follow: N25, N78, and N106.

This sequence belongs to the integrin alpha chain family. As to quaternary structure, heterodimer of an alpha and a beta chain. ITGAM associates with ITGB2. Found in a complex with CD177 and ITGB2/CD18. Interacts with JAM3. Interacts with THBD. Interacts with TMEM268; this interaction inhibits ITGAM degradation via the endosome-lysosome pathway.

It localises to the cell membrane. It is found in the membrane raft. Integrin ITGAM/ITGB2 is implicated in various adhesive interactions of monocytes, macrophages and granulocytes as well as in mediating the uptake of complement-coated particles. It is identical with CR-3, the receptor for the iC3b fragment of the third complement component. It probably recognizes the R-G-D peptide in C3b. Integrin ITGAM/ITGB2 is also a receptor for fibrinogen, factor X and ICAM1. It recognizes P1 and P2 peptides of fibrinogen gamma chain. Regulates neutrophil migration. In association with beta subunit ITGB2/CD18, required for CD177-PRTN3-mediated activation of TNF primed neutrophils. May regulate phagocytosis-induced apoptosis in extravasated neutrophils. May play a role in mast cell development. Required with TYROBP/DAP12 in microglia to control production of microglial superoxide ions which promote the neuronal apoptosis that occurs during brain development. The sequence is that of Integrin alpha-M (ITGAM) from Cavia porcellus (Guinea pig).